The chain runs to 231 residues: Flagellar L-ring protein (231 aa).

Residues 1-18 (MSRLLIVVSLSSAFALAG) form the signal peptide. A lipid anchor (N-palmitoyl cysteine) is attached at Cys-19. Cys-19 carries the S-diacylglycerol cysteine lipid modification.

It belongs to the FlgH family. As to quaternary structure, the basal body constitutes a major portion of the flagellar organelle and consists of four rings (L,P,S, and M) mounted on a central rod.

The protein localises to the cell outer membrane. The protein resides in the bacterial flagellum basal body. Functionally, assembles around the rod to form the L-ring and probably protects the motor/basal body from shearing forces during rotation. This chain is Flagellar L-ring protein, found in Stutzerimonas stutzeri (strain A1501) (Pseudomonas stutzeri).